Here is a 312-residue protein sequence, read N- to C-terminus: Acetaldehyde dehydrogenase (312 aa).

NAD(+) is bound at residue S12–V15. C132 functions as the Acyl-thioester intermediate in the catalytic mechanism. Residues S163–N171 and N290 contribute to the NAD(+) site.

The protein belongs to the acetaldehyde dehydrogenase family.

The enzyme catalyses acetaldehyde + NAD(+) + CoA = acetyl-CoA + NADH + H(+). This chain is Acetaldehyde dehydrogenase (cbzQ), found in Pseudomonas putida (Arthrobacter siderocapsulatus).